A 348-amino-acid chain; its full sequence is Probable dual-specificity RNA methyltransferase RlmN (348 aa).

Catalysis depends on Glu-89, which acts as the Proton acceptor. Residues 95–330 (ERDHYTLCVS…NFVRFSKGVE (236 aa)) enclose the Radical SAM core domain. Cys-102 and Cys-335 form a disulfide bridge. Residues Cys-109, Cys-113, and Cys-116 each contribute to the [4Fe-4S] cluster site. Residues 157 to 158 (GE), Ser-189, 214 to 216 (SLN), and Asn-292 contribute to the S-adenosyl-L-methionine site. The active-site S-methylcysteine intermediate is Cys-335.

This sequence belongs to the radical SAM superfamily. RlmN family. Requires [4Fe-4S] cluster as cofactor.

It localises to the cytoplasm. It catalyses the reaction adenosine(2503) in 23S rRNA + 2 reduced [2Fe-2S]-[ferredoxin] + 2 S-adenosyl-L-methionine = 2-methyladenosine(2503) in 23S rRNA + 5'-deoxyadenosine + L-methionine + 2 oxidized [2Fe-2S]-[ferredoxin] + S-adenosyl-L-homocysteine. It carries out the reaction adenosine(37) in tRNA + 2 reduced [2Fe-2S]-[ferredoxin] + 2 S-adenosyl-L-methionine = 2-methyladenosine(37) in tRNA + 5'-deoxyadenosine + L-methionine + 2 oxidized [2Fe-2S]-[ferredoxin] + S-adenosyl-L-homocysteine. In terms of biological role, specifically methylates position 2 of adenine 2503 in 23S rRNA and position 2 of adenine 37 in tRNAs. The sequence is that of Probable dual-specificity RNA methyltransferase RlmN from Aquifex aeolicus (strain VF5).